A 288-amino-acid polypeptide reads, in one-letter code: Protein sprouty homolog 3 (288 aa).

The SPR domain occupies Lys-154 to Cys-260.

Belongs to the sprouty family. Interacts with TESK1. Interacts with USP11. Interacts with CAV1 (via C-terminus). Widely expressed; particularly in the fetal tissues. Expressed in the brain with expression the highest in Purkinje cells in the cerebellum (at protein level). Expressed in the myocardium of the heart.

The protein localises to the cytoplasm. Its function is as follows. Inhibits neurite branching, arbor length and neurite complexity. Inhibits EGF-mediated p42/44 ERK signaling. Negatively regulates the MAPK cascade, resulting in a reduction of extracellular matrix protein accumulation. May function as an antagonist of fibroblast growth factor (FGF) pathways and may negatively modulate respiratory organogenesis. The protein is Protein sprouty homolog 3 of Homo sapiens (Human).